The following is a 633-amino-acid chain: Pescadillo homolog (633 aa).

In terms of domain architecture, BRCT spans Arg-321–Leu-414. Disordered regions lie at residues His-450–Glu-470 and Lys-490–Arg-567. A phosphoserine mark is found at Ser-453 and Ser-457. 2 stretches are compositionally biased toward acidic residues: residues Glu-454–Glu-470 and Val-498–Asp-526. Residues Glu-527–Lys-538 show a composition bias toward basic and acidic residues. A compositionally biased stretch (basic residues) spans Lys-545–Val-554. Over residues His-555–Leu-564 the composition is skewed to basic and acidic residues. A coiled-coil region spans residues Leu-593–Ala-626.

This sequence belongs to the pescadillo family.

It localises to the nucleus. It is found in the nucleolus. The protein localises to the nucleoplasm. Its function is as follows. Required for maturation of ribosomal RNAs and formation of the large ribosomal subunit. This Drosophila virilis (Fruit fly) protein is Pescadillo homolog.